Consider the following 103-residue polypeptide: MKKFFIIDAEYLFVYGLYVAENPIKAVTIAYNNTLKDSYHDNIDGETITLLAYEITSVPTIHVINCARYSVNNYMIINGLPTLVEYRLDMKFDDTPIFDLLYF.

This is an uncharacterized protein from Acanthamoeba polyphaga (Amoeba).